The following is a 138-amino-acid chain: ATP synthase epsilon chain (138 aa).

Belongs to the ATPase epsilon chain family. In terms of assembly, F-type ATPases have 2 components, CF(1) - the catalytic core - and CF(0) - the membrane proton channel. CF(1) has five subunits: alpha(3), beta(3), gamma(1), delta(1), epsilon(1). CF(0) has three main subunits: a, b and c.

It is found in the cell inner membrane. Functionally, produces ATP from ADP in the presence of a proton gradient across the membrane. In Bartonella quintana (strain Toulouse) (Rochalimaea quintana), this protein is ATP synthase epsilon chain.